The following is a 545-amino-acid chain: CTP synthase (545 aa).

Residues 1–266 (MTTRYIFVTG…DELVIKRFNI (266 aa)) form an amidoligase domain region. S14 lines the CTP pocket. S14 is a UTP binding site. Residues 15-20 (SLGKGI) and D72 contribute to the ATP site. Positions 72 and 140 each coordinate Mg(2+). Residues 147-149 (DIE), 187-192 (KTKPTQ), and K223 contribute to the CTP site. Residues 187–192 (KTKPTQ) and K223 each bind UTP. Position 239–241 (239–241 (KDV)) interacts with ATP. Residues 291-542 (TIGMVGKYIE…IAASLSHQKR (252 aa)) enclose the Glutamine amidotransferase type-1 domain. Residue G352 participates in L-glutamine binding. Catalysis depends on C379, which acts as the Nucleophile; for glutamine hydrolysis. L-glutamine-binding positions include 380–383 (LGMQ), E403, and R470. Catalysis depends on residues H515 and E517.

Belongs to the CTP synthase family. As to quaternary structure, homotetramer.

The enzyme catalyses UTP + L-glutamine + ATP + H2O = CTP + L-glutamate + ADP + phosphate + 2 H(+). It catalyses the reaction L-glutamine + H2O = L-glutamate + NH4(+). It carries out the reaction UTP + NH4(+) + ATP = CTP + ADP + phosphate + 2 H(+). The protein operates within pyrimidine metabolism; CTP biosynthesis via de novo pathway; CTP from UDP: step 2/2. Allosterically activated by GTP, when glutamine is the substrate; GTP has no effect on the reaction when ammonia is the substrate. The allosteric effector GTP functions by stabilizing the protein conformation that binds the tetrahedral intermediate(s) formed during glutamine hydrolysis. Inhibited by the product CTP, via allosteric rather than competitive inhibition. Functionally, catalyzes the ATP-dependent amination of UTP to CTP with either L-glutamine or ammonia as the source of nitrogen. Regulates intracellular CTP levels through interactions with the four ribonucleotide triphosphates. This is CTP synthase from Shewanella denitrificans (strain OS217 / ATCC BAA-1090 / DSM 15013).